The following is a 598-amino-acid chain: Protein unc-93 homolog B1 (598 aa).

The interval 1-36 (MEVEPPLYPVAGAAGPQGDEDRHGVPDGPEAPLDEL) is disordered. Helical transmembrane passes span 64 to 84 (VLAA…LLQM), 110 to 130 (KMLM…PVLI), 132 to 152 (FFGT…FVST), 160 to 180 (TLVP…ASMG), and 223 to 243 (IFYS…IYFL). N-linked (GlcNAc...) asparagine glycosylation is found at asparagine 251 and asparagine 272. Transmembrane regions (helical) follow at residues 285 to 305 (LIVV…MVLG), 343 to 363 (LVPF…GFAL), 378 to 398 (LLIA…LGLW), 403 to 423 (VPLV…FFWA), and 428 to 448 (VLQH…GSAL). Asparagine 449 carries an N-linked (GlcNAc...) asparagine glycan. 2 helical membrane passes run 469 to 489 (FIFT…YLGS) and 495 to 515 (AKLA…LWME). The interval 524-598 (PRQPRIPKPQ…ALGGDGPEEQ (75 aa)) is disordered. A compositionally biased stretch (acidic residues) spans 544 to 554 (EDNSDESDMEG). 2 positions are modified to phosphoserine: serine 547 and serine 550.

Belongs to the unc-93 family. As to quaternary structure, interacts with TLR3, TLR5, TLR7, TLR8, TLR9 and TLR13 (probably via transmembrane domain). Post-translationally, N-glycosylated.

The protein localises to the endoplasmic reticulum membrane. It is found in the endosome. Its subcellular location is the lysosome. The protein resides in the cytoplasmic vesicle. It localises to the phagosome. Its function is as follows. Plays an important role in innate and adaptive immunity by regulating nucleotide-sensing Toll-like receptor (TLR) signaling. Required for the transport of a subset of TLRs (including TLR3, TLR7 and TLR9) from the endoplasmic reticulum to endolysosomes where they can engage pathogen nucleotides and activate signaling cascades. May play a role in autoreactive B-cells removal. The chain is Protein unc-93 homolog B1 from Mus musculus (Mouse).